The sequence spans 569 residues: Dihydroxy-acid dehydratase (569 aa).

Asp-80 contacts Mg(2+). Position 121 (Cys-121) interacts with [2Fe-2S] cluster. Asp-122 and Lys-123 together coordinate Mg(2+). N6-carboxylysine is present on Lys-123. Cys-194 contacts [2Fe-2S] cluster. Residue Glu-446 coordinates Mg(2+). The active-site Proton acceptor is the Ser-472.

The protein belongs to the IlvD/Edd family. Homodimer. The cofactor is [2Fe-2S] cluster. Mg(2+) is required as a cofactor.

The catalysed reaction is (2R)-2,3-dihydroxy-3-methylbutanoate = 3-methyl-2-oxobutanoate + H2O. It carries out the reaction (2R,3R)-2,3-dihydroxy-3-methylpentanoate = (S)-3-methyl-2-oxopentanoate + H2O. The protein operates within amino-acid biosynthesis; L-isoleucine biosynthesis; L-isoleucine from 2-oxobutanoate: step 3/4. Its pathway is amino-acid biosynthesis; L-valine biosynthesis; L-valine from pyruvate: step 3/4. Its function is as follows. Functions in the biosynthesis of branched-chain amino acids. Catalyzes the dehydration of (2R,3R)-2,3-dihydroxy-3-methylpentanoate (2,3-dihydroxy-3-methylvalerate) into 2-oxo-3-methylpentanoate (2-oxo-3-methylvalerate) and of (2R)-2,3-dihydroxy-3-methylbutanoate (2,3-dihydroxyisovalerate) into 2-oxo-3-methylbutanoate (2-oxoisovalerate), the penultimate precursor to L-isoleucine and L-valine, respectively. The protein is Dihydroxy-acid dehydratase of Desulforudis audaxviator (strain MP104C).